The following is a 632-amino-acid chain: Protein EAP1 (632 aa).

Disordered regions lie at residues 1 to 80, 149 to 204, and 248 to 313; these read MELN…KKNK, MGPP…DDEE, and KSKG…PSLS. Composition is skewed to polar residues over residues 7 to 38 and 54 to 69; these read SIIS…SNLF and VESS…ATSG. Ser-30 bears the Phosphoserine mark. Phosphoserine is present on residues Ser-281 and Ser-282. The segment covering 288-298 has biased composition (basic and acidic residues); the sequence is NLKRQDKKEES. Ser-327 and Ser-344 each carry phosphoserine. The interval 347-378 is disordered; sequence SLPSLDNNNQVPSSNVSVVNNDGNSTPHQSGS. Residues 353 to 371 are compositionally biased toward low complexity; sequence NNNQVPSSNVSVVNNDGNS. Ser-387 carries the phosphoserine modification. 2 disordered regions span residues 429 to 541 and 587 to 632; these read QHPP…PPPP and QGNF…KNIK. 440–447 serves as a coordination point for ATP; it reads GLLNKGKS. Pro residues predominate over residues 474-486; that stretch reads PNFPQRMMPPPPG. The segment covering 492–505 has biased composition (basic and acidic residues); the sequence is KDSKDVNKKEDRQL. 3 stretches are compositionally biased toward polar residues: residues 507–516, 590–603, and 610–621; these read QNKNPNGTRN, FPPN…SNSP, and INANGKNVTNQL.

As to quaternary structure, interacts with SMY2, SYH1 and eIF4E.

The protein localises to the cytoplasm. Can regulate translation through binding to eIF4E. Competes with eIF4G and p20 for binding to eIF4E in vivo and inhibits cap-dependent translation in vitro. Plays a role in cell growth and is implicated in the TOR signaling cascade. Functions independently of eIF4E to maintain genetic stability and to attenuate GCN4 translation upon TOR inactivation. The protein is Protein EAP1 (EAP1) of Saccharomyces cerevisiae (strain ATCC 204508 / S288c) (Baker's yeast).